The sequence spans 307 residues: Manganese-dependent inorganic pyrophosphatase (307 aa).

His7, Asp11, Asp13, Asp66, His88, and Asp147 together coordinate Mn(2+).

Mn(2+) serves as cofactor.

Its subcellular location is the cytoplasm. The catalysed reaction is diphosphate + H2O = 2 phosphate + H(+). This Methanocaldococcus jannaschii (strain ATCC 43067 / DSM 2661 / JAL-1 / JCM 10045 / NBRC 100440) (Methanococcus jannaschii) protein is Manganese-dependent inorganic pyrophosphatase (ppaC).